A 349-amino-acid polypeptide reads, in one-letter code: Uroporphyrinogen decarboxylase (349 aa).

Residues 23–27 (RQAGR), Asp71, Tyr148, Ser203, and His317 each bind substrate.

This sequence belongs to the uroporphyrinogen decarboxylase family. In terms of assembly, homodimer.

The protein resides in the cytoplasm. It catalyses the reaction uroporphyrinogen III + 4 H(+) = coproporphyrinogen III + 4 CO2. It participates in porphyrin-containing compound metabolism; protoporphyrin-IX biosynthesis; coproporphyrinogen-III from 5-aminolevulinate: step 4/4. In terms of biological role, catalyzes the decarboxylation of four acetate groups of uroporphyrinogen-III to yield coproporphyrinogen-III. The polypeptide is Uroporphyrinogen decarboxylase (Sorangium cellulosum (strain So ce56) (Polyangium cellulosum (strain So ce56))).